Reading from the N-terminus, the 527-residue chain is tRNA (uracil(54)-C(5))-methyltransferase (527 aa).

Residues Pro107–Glu167 form the TRAM domain. Residues Cys182, Cys188, Cys191, and Cys276 each coordinate [4Fe-4S] cluster. S-adenosyl-L-methionine-binding residues include Gln347, Tyr383, Glu404, and Asp451. Catalysis depends on Cys478, which acts as the Nucleophile. Catalysis depends on Glu517, which acts as the Proton acceptor.

The protein belongs to the class I-like SAM-binding methyltransferase superfamily. RNA M5U methyltransferase family.

It catalyses the reaction uridine(54) in tRNA + S-adenosyl-L-methionine = 5-methyluridine(54) in tRNA + S-adenosyl-L-homocysteine + H(+). Functionally, catalyzes the formation of 5-methyl-uridine at position 54 (m5U54) in all tRNA. May also have a role in tRNA stabilization or maturation. The chain is tRNA (uracil(54)-C(5))-methyltransferase from Schizosaccharomyces pombe (strain 972 / ATCC 24843) (Fission yeast).